The sequence spans 142 residues: Peptide methionine sulfoxide reductase MsrB (142 aa).

The region spanning Lys3–Phe126 is the MsrB domain. Residue Cys115 is the Nucleophile of the active site.

This sequence belongs to the MsrB Met sulfoxide reductase family.

It carries out the reaction L-methionyl-[protein] + [thioredoxin]-disulfide + H2O = L-methionyl-(R)-S-oxide-[protein] + [thioredoxin]-dithiol. The polypeptide is Peptide methionine sulfoxide reductase MsrB (Lactococcus lactis subsp. lactis (strain IL1403) (Streptococcus lactis)).